The primary structure comprises 422 residues: MNVLIIGKGGREHTLAWKAAQSSLVENVFAAPGNDGMAASAQLVNIEESDHAGLVSFAKQNQVGLTIVGPEVPLIEGLVDEFEKAGLHVFGPSKAAAIIEGSKQFAKDLMKKYDIPTAEYETFTSFDEAKAYVQEKGAPIVIKADGLAAGKGVTVAMTEEEAIACLHDFLEDEKFGDASASVVIEEYLSGEEFSLMAFVKGEKVYPMVIAQDHKRAFDGDKGPNTGGMGAYSPVPQISEETVRHAVETIVKPAAKAMVQEGRSFTGVLYAGLMLTENGSKVIEFNARFGDPETQVVLPRMESDLVQVLLDLLDDKEVDLRWKDTAAVSVVLASEGYPESYAKGTPIGSLAAETEQVVVFHAGTKAEGGEFVTNGGRVANVTAFDETFEAARDRVYKAVDEIFKPGLFFRKDIGARALKAAQK.

Positions 107–313 constitute an ATP-grasp domain; that stretch reads KDLMKKYDIP…LVQVLLDLLD (207 aa). 133 to 194 lines the ATP pocket; it reads VQEKGAPIVI…EEYLSGEEFS (62 aa). Glu283 and Asn285 together coordinate Mg(2+).

This sequence belongs to the GARS family. It depends on Mg(2+) as a cofactor. Mn(2+) serves as cofactor.

The catalysed reaction is 5-phospho-beta-D-ribosylamine + glycine + ATP = N(1)-(5-phospho-beta-D-ribosyl)glycinamide + ADP + phosphate + H(+). Its pathway is purine metabolism; IMP biosynthesis via de novo pathway; N(1)-(5-phospho-D-ribosyl)glycinamide from 5-phospho-alpha-D-ribose 1-diphosphate: step 2/2. The polypeptide is Phosphoribosylamine--glycine ligase (Bacillus subtilis (strain 168)).